A 287-amino-acid chain; its full sequence is Fructose-bisphosphate aldolase (287 aa).

Ser50 is a D-glyceraldehyde 3-phosphate binding site. The active-site Proton donor is Asp85. His86, Asp107, Glu137, and His181 together coordinate Zn(2+). Dihydroxyacetone phosphate is bound at residue Gly182. His209 is a Zn(2+) binding site. Dihydroxyacetone phosphate contacts are provided by residues 210-212 (GGT) and 231-234 (NVNT). 2 positions are modified to phosphothreonine: Thr212 and Thr234.

It belongs to the class II fructose-bisphosphate aldolase family. Requires Zn(2+) as cofactor.

The enzyme catalyses beta-D-fructose 1,6-bisphosphate = D-glyceraldehyde 3-phosphate + dihydroxyacetone phosphate. It participates in carbohydrate degradation; glycolysis; D-glyceraldehyde 3-phosphate and glycerone phosphate from D-glucose: step 4/4. In terms of biological role, catalyzes the aldol condensation of dihydroxyacetone phosphate (DHAP or glycerone-phosphate) with glyceraldehyde 3-phosphate (G3P) to form fructose 1,6-bisphosphate (FBP) in gluconeogenesis and the reverse reaction in glycolysis. The chain is Fructose-bisphosphate aldolase (fba) from Geobacillus stearothermophilus (Bacillus stearothermophilus).